The primary structure comprises 188 residues: Adenine phosphoribosyltransferase (188 aa).

This sequence belongs to the purine/pyrimidine phosphoribosyltransferase family. In terms of assembly, homodimer.

The protein localises to the cytoplasm. It catalyses the reaction AMP + diphosphate = 5-phospho-alpha-D-ribose 1-diphosphate + adenine. It functions in the pathway purine metabolism; AMP biosynthesis via salvage pathway; AMP from adenine: step 1/1. Functionally, catalyzes a salvage reaction resulting in the formation of AMP, that is energically less costly than de novo synthesis. This Burkholderia vietnamiensis (strain G4 / LMG 22486) (Burkholderia cepacia (strain R1808)) protein is Adenine phosphoribosyltransferase.